The chain runs to 602 residues: Elongation factor 4 (602 aa).

One can recognise a tr-type G domain in the interval 7-189; sequence SRIRNFSIIA…SIVQQVPPPA (183 aa). GTP contacts are provided by residues 19–24 and 136–139; these read DHGKST and NKID.

This sequence belongs to the TRAFAC class translation factor GTPase superfamily. Classic translation factor GTPase family. LepA subfamily.

It localises to the cell inner membrane. It catalyses the reaction GTP + H2O = GDP + phosphate + H(+). Required for accurate and efficient protein synthesis under certain stress conditions. May act as a fidelity factor of the translation reaction, by catalyzing a one-codon backward translocation of tRNAs on improperly translocated ribosomes. Back-translocation proceeds from a post-translocation (POST) complex to a pre-translocation (PRE) complex, thus giving elongation factor G a second chance to translocate the tRNAs correctly. Binds to ribosomes in a GTP-dependent manner. The protein is Elongation factor 4 of Picosynechococcus sp. (strain ATCC 27264 / PCC 7002 / PR-6) (Agmenellum quadruplicatum).